Here is a 420-residue protein sequence, read N- to C-terminus: Glycogen synthase kinase-3 beta (420 aa).

The segment covering 1–22 (MSGRPRTTSFAESCKPVQQPSA) has biased composition (polar residues). A disordered region spans residues 1-35 (MSGRPRTTSFAESCKPVQQPSAFGSMKVSRDKDGS). Phosphoserine; by PKB/AKT1, RPS6KA3 and SGK3 is present on S9. Residue C14 is the site of S-palmitoyl cysteine attachment. One can recognise a Protein kinase domain in the interval 56–340 (YTDTKVIGNG…PLEACAHSFF (285 aa)). ATP contacts are provided by residues 62-70 (IGNGSFGVV) and K85. Catalysis depends on D181, which acts as the Proton acceptor. Phosphotyrosine is present on Y216. Composition is skewed to low complexity over residues 387-401 (AAST…SDAN) and 409-420 (NNAAFASASNST). Positions 387 to 420 (AASTPTNATAASDANAGDRGQTNNAAFASASNST) are disordered. S389 carries the post-translational modification Phosphoserine. T390 carries the post-translational modification Phosphothreonine.

The protein belongs to the protein kinase superfamily. CMGC Ser/Thr protein kinase family. GSK-3 subfamily. In terms of assembly, monomer. Interacts with DAB2IP (via C2 domain); the interaction stimulates GSK3B kinase activation. Interacts (via C2 domain) with PPP2CA. Interacts with ARRB2, AXIN1, CABYR, DISC1, MMP2, MUC1, NIN, PRUNE1 and ZBED3. Interacts with AXIN1; the interaction mediates hyperphosphorylation of CTNNB1 leading to its ubiquitination and destruction. Interacts with and phosphorylates SNAI1. Interacts with DNM1L (via a C-terminal domain). Found in a complex composed of MACF1, APC, AXIN1, CTNNB1 and GSK3B. Interacts with SGK3. Interacts with the CLOCK-BMAL1 heterodimer. Interacts with the BMAL1. Interacts with CTNND2. The complex composed, at least, of APC, CTNNB1 and GSK3B interacts with JPT1; the interaction requires the inactive form of GSK3B (phosphorylated at 'Ser-9'). Forms a complex composed of PRKAR2A or PRKAR2B, GSK3B and GSKIP through GSKIP interaction; facilitates PKA-induced phosphorylation and regulates GSK3B activity. Interacts with GSKIP. Interacts with GID8. Interacts with PIWIL2. Interacts with LMBR1L. Interacts with DDX3X. Interacts with BIRC2. Interacts with TNFRSF10B; TNFRSF10B stimulation inhibits GSK3B kinase activity. Found in a complex with SLC39A6, SLC39A10 and with GSK3B that controls NCAM1 phosphorylation. Interacts with PKP3 (via ARM repeats); the interaction may be involved in PKP3 protein degradation. Post-translationally, phosphorylated by AKT1 and ILK1. Upon insulin-mediated signaling, the activated PKB/AKT1 and RPS6KA3 protein kinases phosphorylate and deactivate GSK3B, resulting in the dephosphorylation and activation of GYS1. Activated by phosphorylation at Tyr-216. Inactivated by phosphorylation at Ser-9. In terms of processing, mono-ADP-ribosylation by PARP10 negatively regulates kinase activity. Palmitoylated. Palmitoylation by ZDHHC4 prevents AKT1-mediated phosphorylation.

It localises to the cytoplasm. Its subcellular location is the nucleus. The protein localises to the cell membrane. The enzyme catalyses L-seryl-[tau protein] + ATP = O-phospho-L-seryl-[tau protein] + ADP + H(+). It catalyses the reaction L-threonyl-[tau protein] + ATP = O-phospho-L-threonyl-[tau protein] + ADP + H(+). It carries out the reaction L-seryl-[protein] + ATP = O-phospho-L-seryl-[protein] + ADP + H(+). The catalysed reaction is L-threonyl-[protein] + ATP = O-phospho-L-threonyl-[protein] + ADP + H(+). With respect to regulation, activated by phosphorylation at Tyr-216. In response to insulin, inhibited by phosphorylation at Ser-9 by PKB/AKT1; phosphorylation at this site causes a conformational change, preventing access of substrates to the active site. Inhibited by IL22 treatment which also triggers phosphorylation at Ser-9, promoting inactivation. Inhibited by lithium. Constitutively active protein kinase that acts as a negative regulator in the hormonal control of glucose homeostasis, Wnt signaling and regulation of transcription factors and microtubules, by phosphorylating and inactivating glycogen synthase (GYS1 or GYS2), EIF2B, CTNNB1/beta-catenin, APC, AXIN1, DPYSL2/CRMP2, JUN, NFATC1/NFATC, MAPT/TAU and MACF1. Requires primed phosphorylation of the majority of its substrates. In skeletal muscle, contributes to insulin regulation of glycogen synthesis by phosphorylating and inhibiting GYS1 activity and hence glycogen synthesis. May also mediate the development of insulin resistance by regulating activation of transcription factors. Regulates protein synthesis by controlling the activity of initiation factor 2B (EIF2BE/EIF2B5) in the same manner as glycogen synthase. In Wnt signaling, GSK3B forms a multimeric complex with APC, AXIN1 and CTNNB1/beta-catenin and phosphorylates the N-terminus of CTNNB1 leading to its degradation mediated by ubiquitin/proteasomes. Phosphorylates JUN at sites proximal to its DNA-binding domain, thereby reducing its affinity for DNA. Phosphorylates NFATC1/NFATC on conserved serine residues promoting NFATC1/NFATC nuclear export, shutting off NFATC1/NFATC gene regulation, and thereby opposing the action of calcineurin. Phosphorylates MAPT/TAU on 'Thr-548', decreasing significantly MAPT/TAU ability to bind and stabilize microtubules. MAPT/TAU is the principal component of neurofibrillary tangles in Alzheimer disease. Plays an important role in ERBB2-dependent stabilization of microtubules at the cell cortex. Phosphorylates MACF1, inhibiting its binding to microtubules which is critical for its role in bulge stem cell migration and skin wound repair. Probably regulates NF-kappa-B (NFKB1) at the transcriptional level and is required for the NF-kappa-B-mediated anti-apoptotic response to TNF-alpha (TNF/TNFA). Negatively regulates replication in pancreatic beta-cells, resulting in apoptosis, loss of beta-cells and diabetes. Through phosphorylation of the anti-apoptotic protein MCL1, may control cell apoptosis in response to growth factors deprivation. Phosphorylates MUC1 in breast cancer cells, decreasing the interaction of MUC1 with CTNNB1/beta-catenin. Is necessary for the establishment of neuronal polarity and axon outgrowth. Phosphorylates MARK2, leading to inhibition of its activity. Phosphorylates SIK1 at 'Thr-182', leading to sustainment of its activity. Phosphorylates ZC3HAV1 which enhances its antiviral activity. Phosphorylates SNAI1, leading to its ubiquitination and proteasomal degradation. Phosphorylates SFPQ at 'Thr-687' upon T-cell activation. Phosphorylates NR1D1 st 'Ser-55' and 'Ser-59' and stabilizes it by protecting it from proteasomal degradation. Regulates the circadian clock via phosphorylation of the major clock components including BMAL1, CLOCK and PER2. Phosphorylates CLOCK AT 'Ser-427' and targets it for proteasomal degradation. Phosphorylates BMAL1 at 'Ser-17' and 'Ser-21' and primes it for ubiquitination and proteasomal degradation. Phosphorylates FBXL2 at 'Thr-404' and primes it for ubiquitination by the SCF(FBXO3) complex and proteasomal degradation. Phosphorylates OGT at 'Ser-3' or 'Ser-4' which positively regulates its activity. Phosphorylates MYCN in neuroblastoma cells which may promote its degradation. Regulates the circadian rhythmicity of hippocampal long-term potentiation and BMAL1 and PER2 expression. Acts as a regulator of autophagy by mediating phosphorylation of KAT5/TIP60 under starvation conditions, activating KAT5/TIP60 acetyltransferase activity and promoting acetylation of key autophagy regulators, such as ULK1 and RUBCNL/Pacer. Negatively regulates extrinsic apoptotic signaling pathway via death domain receptors. Promotes the formation of an anti-apoptotic complex, made of DDX3X, BRIC2 and GSK3B, at death receptors, including TNFRSF10B. The anti-apoptotic function is most effective with weak apoptotic signals and can be overcome by stronger stimulation. Phosphorylates E2F1, promoting the interaction between E2F1 and USP11, stabilizing E2F1 and promoting its activity. Phosphorylates mTORC2 complex component RICTOR at 'Ser-1235' in response to endoplasmic stress, inhibiting mTORC2. Phosphorylates FXR1, promoting FXR1 ubiquitination by the SCF(FBXO4) complex and FXR1 degradation by the proteasome. Phosphorylates interleukin-22 receptor subunit IL22RA1, preventing its proteasomal degradation. This is Glycogen synthase kinase-3 beta from Spermophilus citellus (European ground squirrel).